Consider the following 78-residue polypeptide: Large ribosomal subunit protein bL28 (78 aa).

The protein belongs to the bacterial ribosomal protein bL28 family.

The chain is Large ribosomal subunit protein bL28 from Trichodesmium erythraeum (strain IMS101).